The primary structure comprises 275 residues: Voltage-dependent calcium channel gamma-7 subunit (275 aa).

Helical transmembrane passes span A8–V28, F103–I123, I129–L149, and F179–L199. Residues S222, S225, and S273 each carry the phosphoserine modification.

It belongs to the PMP-22/EMP/MP20 family. CACNG subfamily. Interacts with CACNA1C. Identified in a complex with the L-type calcium channel subunits CACNA1C, CACNA2D1 and either CACNB1 or CACNB2. Acts as an auxiliary subunit for AMPA-selective glutamate receptors (AMPARs), such as GRIA1 and GRIA2. In terms of tissue distribution, detected in heart left ventricle. Widely expressed.

The protein resides in the cell membrane. Its function is as follows. Regulates the activity of L-type calcium channels that contain CACNA1C as pore-forming subunit. Regulates the trafficking and gating properties of AMPA-selective glutamate receptors (AMPARs). Promotes their targeting to the cell membrane and synapses and modulates their gating properties by slowing their rates of activation, deactivation and desensitization and by mediating their resensitization. Displays subunit-specific AMPA receptor regulation. Shows specificity only for GRIA1 and GRIA2. The chain is Voltage-dependent calcium channel gamma-7 subunit (CACNG7) from Homo sapiens (Human).